Here is a 265-residue protein sequence, read N- to C-terminus: Elongation factor 1-delta (265 aa).

Positions 31–54 are enriched in polar residues; that stretch reads MGSASNKPHNSPQSAASALSNSGD. 2 disordered regions span residues 31-64 and 118-155; these read MGSASNKPHNSPQSAASALSNSGDGSELAARVAN and KVQVTPAAKEENGTGEDDDDDDDIDLFGSDNEEEDAEA. Acidic residues predominate over residues 130–153; sequence GTGEDDDDDDDIDLFGSDNEEEDA.

The protein belongs to the EF-1-beta/EF-1-delta family. EF-1 is composed of 4 subunits: alpha, beta, delta, and gamma.

In terms of biological role, EF-1-beta and EF-1-delta stimulate the exchange of GDP bound to EF-1-alpha to GTP. The sequence is that of Elongation factor 1-delta (eef1d) from Xenopus laevis (African clawed frog).